The following is a 129-amino-acid chain: Follitropin subunit beta (129 aa).

Residues M1–C18 form the signal peptide. Cystine bridges form between C21-C69, C35-C84, C38-C122, C46-C100, C50-C102, and C105-C112. N-linked (GlcNAc...) asparagine glycosylation is found at N25 and N42.

The protein belongs to the glycoprotein hormones subunit beta family. Heterodimer. The active follitropin is a heterodimer composed of an alpha chain/CGA shared with other hormones and a unique beta chain/FSHB shown here.

The protein resides in the secreted. Functionally, together with the alpha chain CGA constitutes follitropin, the follicle-stimulating hormone, and provides its biological specificity to the hormone heterodimer. Binds FSHR, a G protein-coupled receptor, on target cells to activate downstream signaling pathways. Follitropin is involved in follicle development and spermatogenesis in reproductive organs. The sequence is that of Follitropin subunit beta (FSHB) from Capra hircus (Goat).